We begin with the raw amino-acid sequence, 253 residues long: N-acetylglucosaminyl-phosphatidylinositol de-N-acetylase (253 aa).

The helical transmembrane segment at 3 to 23 (VAAPLLCLAAAVLVWGVLWVW) threads the bilayer. Residues 24-253 (GSWERMTRPE…YMRINSLNFL (230 aa)) lie on the Cytoplasmic side of the membrane.

The protein belongs to the PIGL family.

Its subcellular location is the endoplasmic reticulum membrane. It catalyses the reaction a 6-(N-acetyl-alpha-D-glucosaminyl)-1-(1,2-diacyl-sn-glycero-3-phospho)-1D-myo-inositol + H2O = a 6-(alpha-D-glucosaminyl)-1-(1,2-diacyl-sn-glycero-3-phospho)-1D-myo-inositol + acetate. It participates in glycolipid biosynthesis; glycosylphosphatidylinositol-anchor biosynthesis. Functionally, catalyzes the second step of glycosylphosphatidylinositol (GPI) biosynthesis, which is the de-N-acetylation of N-acetylglucosaminyl-phosphatidylinositol. This chain is N-acetylglucosaminyl-phosphatidylinositol de-N-acetylase (PIGL), found in Bos taurus (Bovine).